The following is a 259-amino-acid chain: Phosphatidylglycerol--prolipoprotein diacylglyceryl transferase (259 aa).

A run of 4 helical transmembrane segments spans residues 9–29, 55–75, 92–112, and 117–137; these read IIFS…VIGI, FITY…VLLY, EGGM…YLFC, and INFL…LFLG. Arginine 138 contributes to the a 1,2-diacyl-sn-glycero-3-phospho-(1'-sn-glycerol) binding site. Helical transmembrane passes span 172–192, 201–221, and 228–248; these read QLYE…YTTF, GLNS…IEIF, and IGFI…MLLL.

This sequence belongs to the Lgt family.

It is found in the cell inner membrane. It catalyses the reaction L-cysteinyl-[prolipoprotein] + a 1,2-diacyl-sn-glycero-3-phospho-(1'-sn-glycerol) = an S-1,2-diacyl-sn-glyceryl-L-cysteinyl-[prolipoprotein] + sn-glycerol 1-phosphate + H(+). Its pathway is protein modification; lipoprotein biosynthesis (diacylglyceryl transfer). Its function is as follows. Catalyzes the transfer of the diacylglyceryl group from phosphatidylglycerol to the sulfhydryl group of the N-terminal cysteine of a prolipoprotein, the first step in the formation of mature lipoproteins. The sequence is that of Phosphatidylglycerol--prolipoprotein diacylglyceryl transferase from Rickettsia africae (strain ESF-5).